The chain runs to 412 residues: Putative F-box protein At3g22940 (412 aa).

One can recognise an F-box domain in the interval 1 to 38; that stretch reads MPLEEILSRLPLKSTRAVRSTCKKWDSLFKNRSFISKA.

This is Putative F-box protein At3g22940 from Arabidopsis thaliana (Mouse-ear cress).